Consider the following 665-residue polypeptide: ATPase WRNIP1 (665 aa).

The UBZ4-type zinc finger occupies 17 to 44 (QVQCPVCQQMMPAAHINSHLDRCLLLHP). Cysteine 20, cysteine 23, histidine 31, histidine 35, and cysteine 39 together coordinate Zn(2+). The interval 48-190 (AEPAAGSHRA…DGEDDPGHWD (143 aa)) is disordered. 2 positions are modified to phosphoserine: serine 65 and serine 75. The span at 76–89 (ESSALKQPATPTAA) shows a compositional bias: polar residues. Lysine 81 participates in a covalent cross-link: Glycyl lysine isopeptide (Lys-Gly) (interchain with G-Cter in ubiquitin). The residue at position 85 (threonine 85) is a Phosphothreonine. Serine 91 and serine 92 each carry phosphoserine. Residues 92 to 104 (SEGEGEEGDDGGE) show a composition bias toward acidic residues. At threonine 116 the chain carries Phosphothreonine. Positions 130-155 (RSSSPGRKGSGKRPAAAAAAGSASPR) are enriched in low complexity. Serine 139 bears the Phosphoserine mark. A Glycyl lysine isopeptide (Lys-Gly) (interchain with G-Cter in ubiquitin) cross-link involves residue lysine 141. Serine 153 is modified (phosphoserine). Over residues 159–184 (EAEAQEEEEAVGDGDGDGDADADGED) the composition is skewed to acidic residues. Lysine 225 participates in a covalent cross-link: Glycyl lysine isopeptide (Lys-Gly) (interchain with G-Cter in ubiquitin). 270–276 (PGCGKTT) is an ATP binding site. Glycyl lysine isopeptide (Lys-Gly) (interchain with G-Cter in ubiquitin) cross-links involve residues lysine 301, lysine 310, lysine 316, lysine 322, and lysine 335. Residue lysine 482 forms a Glycyl lysine isopeptide (Lys-Gly) (interchain with G-Cter in SUMO2); alternate linkage. Lysine 482 is covalently cross-linked (Glycyl lysine isopeptide (Lys-Gly) (interchain with G-Cter in ubiquitin); alternate). Tyrosine 534 and tyrosine 562 each carry phosphotyrosine. Residue lysine 627 forms a Glycyl lysine isopeptide (Lys-Gly) (interchain with G-Cter in ubiquitin) linkage. A Glycyl lysine isopeptide (Lys-Gly) (interchain with G-Cter in ubiquitin); alternate cross-link involves residue lysine 633. The residue at position 633 (lysine 633) is an N6-acetyllysine; alternate. Lysine 636 is covalently cross-linked (Glycyl lysine isopeptide (Lys-Gly) (interchain with G-Cter in ubiquitin)).

Belongs to the AAA ATPase family. RarA/MGS1/WRNIP1 subfamily. In terms of assembly, forms homooligomers, possibly octamers. Directly interacts with POLD1, POLD2 and POLD4. Interacts with the N-terminal domain of WRN. Interacts (via UBZ4-type zinc finger) with monoubiquitin and polyubiquitin. Interacts with TRIM14 and PPP6C; these interactions positively regulate the RIGI signaling pathway. In terms of processing, sumoylated with SUMO1 and SUMO2/3. As to expression, ubiquitously expressed.

The protein resides in the nucleus. It is found in the cytoplasm. It carries out the reaction ATP + H2O = ADP + phosphate + H(+). In terms of biological role, functions as a modulator of initiation or reinitiation events during DNA polymerase delta-mediated DNA synthesis. In the presence of ATP, stimulation of DNA polymerase delta-mediated DNA synthesis is decreased. Also plays a role in the innate immune defense against viruses. Stabilizes the RIGI dsRNA interaction and promotes RIGI 'Lys-63'-linked polyubiquitination. In turn, RIGI transmits the signal through mitochondrial MAVS. This chain is ATPase WRNIP1, found in Homo sapiens (Human).